Consider the following 365-residue polypeptide: Cytosolic 5'-nucleotidase 1A (365 aa).

The segment covering 1 to 11 (MEPGQPREARE) has biased composition (basic and acidic residues). The segment at 1 to 23 (MEPGQPREAREPGPGAETAAVPR) is disordered. Aspartate 208 (nucleophile) is an active-site residue.

Belongs to the 5'-nucleotidase type 3 family. Mg(2+) is required as a cofactor.

The protein localises to the cytoplasm. The enzyme catalyses a ribonucleoside 5'-phosphate + H2O = a ribonucleoside + phosphate. It catalyses the reaction a 2'-deoxyribonucleoside 5'-phosphate + H2O = a 2'-deoxyribonucleoside + phosphate. The catalysed reaction is IMP + H2O = inosine + phosphate. It carries out the reaction AMP + H2O = adenosine + phosphate. The enzyme catalyses dCMP + H2O = 2'-deoxycytidine + phosphate. With respect to regulation, activated by ADP. Its function is as follows. Catalyzes the hydrolysis of ribonucleotide and deoxyribonucleotide monophosphates, releasing inorganic phosphate and the corresponding nucleoside. AMP is the major substrate but can also hydrolyze dCMP and IMP. This chain is Cytosolic 5'-nucleotidase 1A (Nt5c1a), found in Mus musculus (Mouse).